Here is a 636-residue protein sequence, read N- to C-terminus: Probable cyclin-dependent serine/threonine-protein kinase DDB_G0278487 (636 aa).

Residues 1 to 41 (MPSQSNNVITSSTASSSMSSSSNSSDASSTSSSNTNNAHSS) are disordered. Residues 64–343 (YEIISKIGEG…AEQALQSPFF (280 aa)) form the Protein kinase domain. ATP-binding positions include 70-78 (IGEGISGSV) and Lys93. Catalysis depends on Asp184, which acts as the Proton acceptor. 4 disordered regions span residues 378–408 (EQQKKQEEQKKQQEEQKKLEDQKKQEEQKKQ), 473–506 (KRQQQEHEQRLQREQQQQLNQLQQQKESPLNNSY), 527–555 (SETESEYESDEEDFYTEEEVEDYSSDEED), and 579–636 (NNQQ…LTIH). Residues 473–485 (KRQQQEHEQRLQR) are compositionally biased toward basic and acidic residues. Positions 486-499 (EQQQQLNQLQQQKE) are enriched in low complexity. A compositionally biased stretch (acidic residues) spans 529–555 (TESEYESDEEDFYTEEEVEDYSSDEED). 2 stretches are compositionally biased toward low complexity: residues 579 to 594 (NNQQHQQQYPYSQQQQ) and 617 to 628 (NNNNGNNNNNNN).

Belongs to the protein kinase superfamily. CMGC Ser/Thr protein kinase family. CDC2/CDKX subfamily.

It catalyses the reaction L-seryl-[protein] + ATP = O-phospho-L-seryl-[protein] + ADP + H(+). It carries out the reaction L-threonyl-[protein] + ATP = O-phospho-L-threonyl-[protein] + ADP + H(+). This Dictyostelium discoideum (Social amoeba) protein is Probable cyclin-dependent serine/threonine-protein kinase DDB_G0278487.